Here is a 211-residue protein sequence, read N- to C-terminus: Uridine kinase (211 aa).

15–22 (GGSGSGKT) contacts ATP.

The protein belongs to the uridine kinase family.

Its subcellular location is the cytoplasm. It catalyses the reaction uridine + ATP = UMP + ADP + H(+). The enzyme catalyses cytidine + ATP = CMP + ADP + H(+). The protein operates within pyrimidine metabolism; CTP biosynthesis via salvage pathway; CTP from cytidine: step 1/3. Its pathway is pyrimidine metabolism; UMP biosynthesis via salvage pathway; UMP from uridine: step 1/1. In Lactobacillus helveticus (strain DPC 4571), this protein is Uridine kinase.